A 295-amino-acid polypeptide reads, in one-letter code: Aquaporin NIP2-1 (295 aa).

Helical transmembrane passes span 49–69 (VVSEVVSTFLLVFVTCGAAGI) and 83–103 (SVAGGLIVTVMIYAVGHISGA). The short motif at 106–108 (NPA) is the NPA 1 element. 3 consecutive transmembrane segments (helical) span residues 124–146 (VPFYWAAQFTGSICASFVLKAVL), 164–184 (SLVIEIIVTFNMMFVTLAVAT), and 192–212 (LAGLAVGSAVCITSIFAGAVS). Positions 217–219 (NPA) match the NPA 2 motif. Residues 230–250 (LYTGLWIYFLGPVLGTLSGAW) traverse the membrane as a helical segment.

It belongs to the MIP/aquaporin (TC 1.A.8) family. NIP (TC 1.A.8.12) subfamily.

It localises to the membrane. In terms of biological role, aquaporins facilitate the transport of water and small neutral solutes across cell membranes. The chain is Aquaporin NIP2-1 (NIP2-1) from Zea mays (Maize).